The sequence spans 228 residues: Cytidylate kinase (228 aa).

17–25 (GPTASGKGT) lines the ATP pocket.

The protein belongs to the cytidylate kinase family. Type 1 subfamily.

It is found in the cytoplasm. The enzyme catalyses CMP + ATP = CDP + ADP. The catalysed reaction is dCMP + ATP = dCDP + ADP. This Burkholderia mallei (strain NCTC 10247) protein is Cytidylate kinase.